A 493-amino-acid polypeptide reads, in one-letter code: Cytochrome P450 2E1 (493 aa).

A substrate-binding site is contributed by 298–303; the sequence is FAGTET. Cys437 is a binding site for heme.

This sequence belongs to the cytochrome P450 family. In terms of assembly, interacts with chaperones HSP70 and HSP90; this interaction is required for initial targeting to mitochondria. Requires heme as cofactor.

It is found in the endoplasmic reticulum membrane. The protein resides in the microsome membrane. Its subcellular location is the mitochondrion inner membrane. The enzyme catalyses an organic molecule + reduced [NADPH--hemoprotein reductase] + O2 = an alcohol + oxidized [NADPH--hemoprotein reductase] + H2O + H(+). The catalysed reaction is (5Z,8Z,11Z)-eicosatrienoate + reduced [NADPH--hemoprotein reductase] + O2 = 19-hydroxy-(5Z,8Z,11Z)-eicosatrienoate + oxidized [NADPH--hemoprotein reductase] + H2O + H(+). It catalyses the reaction (5Z,8Z,11Z,14Z,17Z)-eicosapentaenoate + reduced [NADPH--hemoprotein reductase] + O2 = 19-hydroxy-(5Z,8Z,11Z,14Z,17Z)-eicosapentaenoate + oxidized [NADPH--hemoprotein reductase] + H2O + H(+). It carries out the reaction (4Z,7Z,10Z,13Z,16Z,19Z)-docosahexaenoate + reduced [NADPH--hemoprotein reductase] + O2 = 21-hydroxy-(4Z,7Z,10Z,13Z,16Z,19Z)-docosahexaenoate + oxidized [NADPH--hemoprotein reductase] + H2O + H(+). The enzyme catalyses dodecanoate + reduced [NADPH--hemoprotein reductase] + O2 = 11-hydroxydodecanoate + oxidized [NADPH--hemoprotein reductase] + H2O + H(+). The catalysed reaction is tetradecanoate + reduced [NADPH--hemoprotein reductase] + O2 = 13-hydroxytetradecanoate + oxidized [NADPH--hemoprotein reductase] + H2O + H(+). It catalyses the reaction 4-nitrophenol + NADPH + O2 + H(+) = 4-nitrocatechol + NADP(+) + H2O. It functions in the pathway lipid metabolism; fatty acid metabolism. Its activity is regulated as follows. The omega-1 hydroxylase activity is stimulated by cytochrome b5. In terms of biological role, a cytochrome P450 monooxygenase involved in the metabolism of fatty acids. Mechanistically, uses molecular oxygen inserting one oxygen atom into a substrate, and reducing the second into a water molecule, with two electrons provided by NADPH via cytochrome P450 reductase (NADPH--hemoprotein reductase). Catalyzes the hydroxylation of carbon-hydrogen bonds. Hydroxylates fatty acids specifically at the omega-1 position displaying the highest catalytic activity for saturated fatty acids. May be involved in the oxidative metabolism of xenobiotics. This Oryctolagus cuniculus (Rabbit) protein is Cytochrome P450 2E1 (CYP2E1).